Reading from the N-terminus, the 462-residue chain is GTPase Der (462 aa).

EngA-type G domains are found at residues 3 to 166 (PVIA…TTET) and 175 to 348 (IKIA…HSAI). GTP is bound by residues 9–16 (GRPNVGKS), 56–60 (DTGGI), 118–121 (NKTD), 181–188 (GRPNVGKS), 228–232 (DTAGV), and 293–296 (NKWD). The 85-residue stretch at 349–433 (QSFSTPKLTR…PLKIEFKGGQ (85 aa)) folds into the KH-like domain.

Belongs to the TRAFAC class TrmE-Era-EngA-EngB-Septin-like GTPase superfamily. EngA (Der) GTPase family. Associates with the 50S ribosomal subunit.

Functionally, GTPase that plays an essential role in the late steps of ribosome biogenesis. The sequence is that of GTPase Der from Legionella pneumophila (strain Paris).